Here is a 411-residue protein sequence, read N- to C-terminus: CCA-adding enzyme (411 aa).

ATP-binding residues include G8 and R11. 2 residues coordinate CTP: G8 and R11. Mg(2+)-binding residues include E21 and D23. Residues R91, R137, and R140 each coordinate ATP. R91, R137, and R140 together coordinate CTP. The HD domain maps to 227 to 328 (LGNQTMTRLS…MTIFQAFDCW (102 aa)).

The protein belongs to the tRNA nucleotidyltransferase/poly(A) polymerase family. Bacterial CCA-adding enzyme type 2 subfamily. Mg(2+) is required as a cofactor.

The enzyme catalyses a tRNA precursor + 2 CTP + ATP = a tRNA with a 3' CCA end + 3 diphosphate. The catalysed reaction is a tRNA with a 3' CCA end + 2 CTP + ATP = a tRNA with a 3' CCACCA end + 3 diphosphate. In terms of biological role, catalyzes the addition and repair of the essential 3'-terminal CCA sequence in tRNAs without using a nucleic acid template. Adds these three nucleotides in the order of C, C, and A to the tRNA nucleotide-73, using CTP and ATP as substrates and producing inorganic pyrophosphate. tRNA 3'-terminal CCA addition is required both for tRNA processing and repair. Also involved in tRNA surveillance by mediating tandem CCA addition to generate a CCACCA at the 3' terminus of unstable tRNAs. While stable tRNAs receive only 3'-terminal CCA, unstable tRNAs are marked with CCACCA and rapidly degraded. This Blochmanniella floridana protein is CCA-adding enzyme.